The chain runs to 413 residues: Putative competence-damage inducible protein (413 aa).

Belongs to the CinA family.

In Lacticaseibacillus casei (strain BL23) (Lactobacillus casei), this protein is Putative competence-damage inducible protein.